We begin with the raw amino-acid sequence, 594 residues long: Pre-mRNA-processing protein 45 (594 aa).

Disordered stretches follow at residues 36–63 (TTEY…RKGW), 223–254 (PPRF…TAQD), 370–426 (ETGI…SEMR), 498–523 (AGSS…SKDR), and 566–594 (EQFM…ARDE). Composition is skewed to pro residues over residues 44 to 53 (APLPATPGPQ) and 235 to 244 (PAEPPPPVLQ). A compositionally biased stretch (acidic residues) spans 383-397 (GSEEESDEEEEDEEA). 3 stretches are compositionally biased toward basic and acidic residues: residues 398 to 417 (IRER…KEMR), 513 to 523 (EGIKEEMSKDR), and 578 to 594 (RTAE…ARDE).

This sequence belongs to the SNW family. Associated with the spliceosome.

It localises to the nucleus. In terms of biological role, involved in pre-mRNA splicing. The sequence is that of Pre-mRNA-processing protein 45 (PRP45) from Cryptococcus neoformans var. neoformans serotype D (strain B-3501A) (Filobasidiella neoformans).